A 208-amino-acid chain; its full sequence is MINFVFVGPFRCLPVPCPEDLLVEDLVDGLLSLEDELKDQREEEESVLDGVLSLEEESRLRWGPVGEEAPPRGETHRDRQRRAEEKRKRKREREKEEEKQIAEFLKRKREKEAWRRRRAEEKAADRARRKLEEEERRERKWRQTEQGAKQRSARKEKMTELGVDGYARQLESEAESLEAERGRLLQENDDLMGEVNYWQRRLEAMWSQ.

The tract at residues 59–93 (RLRWGPVGEEAPPRGETHRDRQRRAEEKRKRKRER) is disordered. Positions 69–86 (APPRGETHRDRQRRAEEK) are enriched in basic and acidic residues. Short sequence motifs (nuclear localization signal) lie at residues 86–91 (KRKRKR), 115–119 (RRRRA), and 136–140 (RRERK). Positions 125–143 (DRARRKLEEEERRERKWRQ) are enriched in basic and acidic residues. The tract at residues 125-160 (DRARRKLEEEERRERKWRQTEQGAKQRSARKEKMTE) is disordered.

The protein belongs to the HTLV-1 HBZ protein family. Interacts with host ATF4; this interaction inhibits viral RNA transcriptional activation by preventing ATF4 binding to Tax-responsive elements. Interacts with host CREB1; this interaction inhibits host CREB1 transcriptional activity. Interacts with host JUN, JUNB and JUND. Interacts with host EP300.

The protein localises to the host nucleus. Functionally, contributes to the regulation of viral RNA transcription by interacting with host proteins involved in transcriptional activation such as ATF4, or CREB1, and by inhibiting their activity. Additionally, HBZ suppresses host NF-kappa-B-driven transcription mediated by host RELA as well as transcription of some classical NF-kappa-B target genes, including IL8, IL2RA, IRF4, VCAM1, and VEGFA. The polypeptide is HTLV-1 basic zipper factor (HBZ) (Human T-cell leukemia virus 1 (isolate Melanesia mel5 subtype C) (HTLV-1)).